We begin with the raw amino-acid sequence, 107 residues long: MPRFTIHDLAATIDARAASGGDASYTRKLLDKGSGHCAKKFGEEAVETVIAAIENDRHHLIAEGADLMFHFLVLLKARGVTFEDIEFALAQRTTMSGLEEKAARNRE.

It belongs to the PRA-PH family.

The protein resides in the cytoplasm. It catalyses the reaction 1-(5-phospho-beta-D-ribosyl)-ATP + H2O = 1-(5-phospho-beta-D-ribosyl)-5'-AMP + diphosphate + H(+). Its pathway is amino-acid biosynthesis; L-histidine biosynthesis; L-histidine from 5-phospho-alpha-D-ribose 1-diphosphate: step 2/9. The sequence is that of Phosphoribosyl-ATP pyrophosphatase from Nitrobacter hamburgensis (strain DSM 10229 / NCIMB 13809 / X14).